A 22-amino-acid chain; its full sequence is Peptide PGLa-BM3 (22 aa).

L22 bears the Leucine amide mark.

Expressed by the skin glands.

The protein resides in the secreted. Antimicrobial peptide. This is Peptide PGLa-BM3 from Xenopus boumbaensis (Mawa clawed frog).